The sequence spans 382 residues: uncharacterized protein (382 aa).

12 helical membrane-spanning segments follow: residues 8–28 (VLLLLCGLLLLTLAIAVLNTL), 39–61 (PTWQVGMVSSSYFTGNLLGTLLT), 75–95 (YLASLIFAAGCVGLGLMVGFW), 102–122 (FIAGVGCAMIWVVVESALMCS), 131–151 (LLAAYMMVYYVGTVLGQLMIS), 157–177 (LMSVLPWVTGMVLAAILPLLF), 204–224 (LGVNGCIISGIVLGSLYGLMP), 236–256 (GIGFWMAVMVSAGIVGQWPIG), 265–284 (LLVLRVQVFVVILGCLAMLG), 289–311 (APALFILGAAGFTLYPVAMAWAC), 325–345 (ALLLSYTIGSLLGPTFTAMLM), and 349–369 (SDNLLFIMIASVAFIYLLMLL).

Belongs to the major facilitator superfamily. YcaD (TC 2.A.1.26) family.

The protein localises to the cell inner membrane. This is an uncharacterized protein from Enterobacter sp. (strain 638).